Consider the following 331-residue polypeptide: 6-phosphogluconolactonase (331 aa).

It belongs to the cycloisomerase 2 family.

It carries out the reaction 6-phospho-D-glucono-1,5-lactone + H2O = 6-phospho-D-gluconate + H(+). It functions in the pathway carbohydrate degradation; pentose phosphate pathway; D-ribulose 5-phosphate from D-glucose 6-phosphate (oxidative stage): step 2/3. Functionally, catalyzes the hydrolysis of 6-phosphogluconolactone to 6-phosphogluconate. The protein is 6-phosphogluconolactonase of Salmonella typhi.